A 243-amino-acid chain; its full sequence is Orotidine 5'-phosphate decarboxylase (243 aa).

Residues aspartate 18, lysine 39, 66 to 75 (DLKFHDIPAT), threonine 130, arginine 192, glutamine 201, glycine 221, and arginine 222 contribute to the substrate site. Lysine 68 functions as the Proton donor in the catalytic mechanism.

The protein belongs to the OMP decarboxylase family. Type 1 subfamily. As to quaternary structure, homodimer.

The catalysed reaction is orotidine 5'-phosphate + H(+) = UMP + CO2. Its pathway is pyrimidine metabolism; UMP biosynthesis via de novo pathway; UMP from orotate: step 2/2. Its function is as follows. Catalyzes the decarboxylation of orotidine 5'-monophosphate (OMP) to uridine 5'-monophosphate (UMP). The sequence is that of Orotidine 5'-phosphate decarboxylase from Synechococcus sp. (strain WH7803).